The primary structure comprises 41 residues: Large ribosomal subunit protein bL36 (41 aa).

The protein belongs to the bacterial ribosomal protein bL36 family.

The sequence is that of Large ribosomal subunit protein bL36 from Opitutus terrae (strain DSM 11246 / JCM 15787 / PB90-1).